The following is a 127-amino-acid chain: Aspartate 1-decarboxylase (127 aa).

Ser25 functions as the Schiff-base intermediate with substrate; via pyruvic acid in the catalytic mechanism. Ser25 carries the post-translational modification Pyruvic acid (Ser). Thr57 serves as a coordination point for substrate. The active-site Proton donor is Tyr58. Position 73–75 (73–75 (GAA)) interacts with substrate.

The protein belongs to the PanD family. Heterooctamer of four alpha and four beta subunits. It depends on pyruvate as a cofactor. In terms of processing, is synthesized initially as an inactive proenzyme, which is activated by self-cleavage at a specific serine bond to produce a beta-subunit with a hydroxyl group at its C-terminus and an alpha-subunit with a pyruvoyl group at its N-terminus.

The protein localises to the cytoplasm. The enzyme catalyses L-aspartate + H(+) = beta-alanine + CO2. Its pathway is cofactor biosynthesis; (R)-pantothenate biosynthesis; beta-alanine from L-aspartate: step 1/1. Its function is as follows. Catalyzes the pyruvoyl-dependent decarboxylation of aspartate to produce beta-alanine. The polypeptide is Aspartate 1-decarboxylase (Clostridium botulinum (strain 657 / Type Ba4)).